The following is an 89-amino-acid chain: Small ribosomal subunit protein uS15 (89 aa).

Belongs to the universal ribosomal protein uS15 family. As to quaternary structure, part of the 30S ribosomal subunit. Forms a bridge to the 50S subunit in the 70S ribosome, contacting the 23S rRNA.

Its function is as follows. One of the primary rRNA binding proteins, it binds directly to 16S rRNA where it helps nucleate assembly of the platform of the 30S subunit by binding and bridging several RNA helices of the 16S rRNA. In terms of biological role, forms an intersubunit bridge (bridge B4) with the 23S rRNA of the 50S subunit in the ribosome. This is Small ribosomal subunit protein uS15 from Baumannia cicadellinicola subsp. Homalodisca coagulata.